Consider the following 320-residue polypeptide: tRNA N6-adenosine threonylcarbamoyltransferase (320 aa).

Residues H114 and H118 each coordinate Fe cation. Residues 136–140 (VVSGG), D169, G182, D186, and N273 each bind substrate. Fe cation is bound at residue D297.

This sequence belongs to the KAE1 / TsaD family. Fe(2+) is required as a cofactor.

It localises to the cytoplasm. The enzyme catalyses L-threonylcarbamoyladenylate + adenosine(37) in tRNA = N(6)-L-threonylcarbamoyladenosine(37) in tRNA + AMP + H(+). Functionally, required for the formation of a threonylcarbamoyl group on adenosine at position 37 (t(6)A37) in tRNAs that read codons beginning with adenine. Is involved in the transfer of the threonylcarbamoyl moiety of threonylcarbamoyl-AMP (TC-AMP) to the N6 group of A37, together with TsaE and TsaB. TsaD likely plays a direct catalytic role in this reaction. This Ureaplasma parvum serovar 3 (strain ATCC 27815 / 27 / NCTC 11736) protein is tRNA N6-adenosine threonylcarbamoyltransferase.